The chain runs to 591 residues: L-fucose isomerase (591 aa).

Catalysis depends on proton acceptor residues Glu-337 and Asp-361. Mn(2+)-binding residues include Glu-337, Asp-361, and His-528.

This sequence belongs to the L-fucose isomerase family. Homohexamer. It depends on Mn(2+) as a cofactor.

The protein resides in the cytoplasm. It catalyses the reaction L-fucose = L-fuculose. The protein operates within carbohydrate degradation; L-fucose degradation; L-lactaldehyde and glycerone phosphate from L-fucose: step 1/3. In terms of biological role, converts the aldose L-fucose into the corresponding ketose L-fuculose. The polypeptide is L-fucose isomerase (Escherichia coli O157:H7 (strain EC4115 / EHEC)).